The following is a 174-amino-acid chain: 2-oxo-4-hydroxy-4-carboxy-5-ureidoimidazoline decarboxylase (174 aa).

The active-site Proton donor is H67. Substrate-binding positions include P68, 84–88 (SQEEQ), and 119–123 (FVICA). Positions 172-174 (TKL) match the Microbody targeting signal motif.

It belongs to the OHCU decarboxylase family. Homodimer.

Its subcellular location is the peroxisome. The catalysed reaction is 5-hydroxy-2-oxo-4-ureido-2,5-dihydro-1H-imidazole-5-carboxylate + H(+) = (S)-allantoin + CO2. It participates in purine metabolism; urate degradation; (S)-allantoin from urate: step 3/3. In terms of biological role, catalyzes the stereoselective decarboxylation of 2-oxo-4-hydroxy-4-carboxy-5-ureidoimidazoline (OHCU) to (S)-allantoin. The sequence is that of 2-oxo-4-hydroxy-4-carboxy-5-ureidoimidazoline decarboxylase (urad) from Danio rerio (Zebrafish).